The primary structure comprises 743 residues: Serine/threonine-protein kinase GD17699 (743 aa).

The interval 54 to 78 (NVQEDNSYNRDCDSPVSSSSEPEKE) is disordered. Doublecortin domains are found at residues 154–240 (LRIK…VEYN) and 309–392 (RIVT…AEDF). One can recognise a Protein kinase domain in the interval 473–731 (YTLGRIIGDG…SEDILDHPWT (259 aa)). Residues 479–487 (IGDGNFAIV) and K502 each bind ATP. The active-site Proton acceptor is D594.

The protein belongs to the protein kinase superfamily. CAMK Ser/Thr protein kinase family. CaMK subfamily.

The catalysed reaction is L-seryl-[protein] + ATP = O-phospho-L-seryl-[protein] + ADP + H(+). It carries out the reaction L-threonyl-[protein] + ATP = O-phospho-L-threonyl-[protein] + ADP + H(+). The polypeptide is Serine/threonine-protein kinase GD17699 (Drosophila simulans (Fruit fly)).